A 387-amino-acid polypeptide reads, in one-letter code: SLC2A4 regulator (387 aa).

Disordered stretches follow at residues Met1 to Pro97 and Glu139 to Ala179. Positions Gly27–Thr36 are enriched in low complexity. The segment at Phe200–His225 adopts a C2H2-type zinc-finger fold. The short motif at Leu253 to Val263 is the Nuclear export signal element. Residues Ser264 and Ser268 each carry the phosphoserine modification. A disordered region spans residues Glu283–Ser305. Positions Pro285–Val303 are enriched in pro residues. Residues Arg351 to Arg354 carry the Nuclear localization signal motif.

As to quaternary structure, interacts with MEF2A. As to expression, according to PubMed:14630949, expressed in heart, skeletal muscle, liver, kidney and pancreas; undetectable in lung, placenta or brain. According to PubMed:14625278, ubiquitously expressed, with lowest expression in brain and ileum.

It is found in the cytoplasm. Its subcellular location is the nucleus. Its function is as follows. Transcription factor involved in SLC2A4 and HD gene transactivation. Binds to the consensus sequence 5'-GCCGGCG-3'. The polypeptide is SLC2A4 regulator (SLC2A4RG) (Homo sapiens (Human)).